Consider the following 779-residue polypeptide: Acyl-CoA dehydrogenase family member 11 (779 aa).

Lys-175 carries the N6-acetyllysine modification. Ser-210 is subject to Phosphoserine. Tyr-323 is modified (phosphotyrosine). An N6-succinyllysine mark is found at Lys-368 and Lys-390. FAD contacts are provided by residues 503-513, 511-513, 537-539, and Ser-539; these read FCMTEPNVSSS, SSS, and WSS. Ser-513 contacts substrate. 628-631 lines the substrate pocket; the sequence is GPGR. FAD-binding positions include Arg-656, Gln-726, and 726-730; that span reads QVHGG. Substrate is bound at residue Gly-754. Residues 755–757 and Glu-757 each bind FAD; that span reads PDE. Lys-765 bears the N6-acetyllysine mark.

The protein belongs to the acyl-CoA dehydrogenase family. As to quaternary structure, homodimer. FAD serves as cofactor.

Its subcellular location is the peroxisome. It is found in the mitochondrion membrane. The enzyme catalyses a 2,3-saturated acyl-CoA + oxidized [electron-transfer flavoprotein] + H(+) = a (2E)-enoyl-CoA + reduced [electron-transfer flavoprotein]. It catalyses the reaction docosanoyl-CoA + oxidized [electron-transfer flavoprotein] + H(+) = (2E)-docosenoyl-CoA + reduced [electron-transfer flavoprotein]. The catalysed reaction is tetracosanoyl-CoA + oxidized [electron-transfer flavoprotein] + H(+) = (2E)-tetracosenoyl-CoA + reduced [electron-transfer flavoprotein]. It carries out the reaction eicosanoyl-CoA + oxidized [electron-transfer flavoprotein] + H(+) = (2E)-eicosenoyl-CoA + reduced [electron-transfer flavoprotein]. The enzyme catalyses hexacosanoyl-CoA + oxidized [electron-transfer flavoprotein] + H(+) = (2E)-hexacosenoyl-CoA + reduced [electron-transfer flavoprotein]. It catalyses the reaction tricosanoyl-CoA + oxidized [electron-transfer flavoprotein] + H(+) = (2E)-tricosenoyl-CoA + reduced [electron-transfer flavoprotein]. Its pathway is lipid metabolism; fatty acid beta-oxidation. Functionally, acyl-CoA dehydrogenase, that exhibits maximal activity towards saturated C22-CoA. Probably participates in beta-oxydation and energy production but could also play a role in the metabolism of specific fatty acids to control fatty acids composition of cellular lipids in brain. The chain is Acyl-CoA dehydrogenase family member 11 (Acad11) from Rattus norvegicus (Rat).